A 441-amino-acid polypeptide reads, in one-letter code: Endothelin receptor type B (441 aa).

A signal peptide spans Met1 to Gly26. Residues Glu27 to Lys100 lie on the Extracellular side of the membrane. A disordered region spans residues Glu30–Gln90. A compositionally biased stretch (polar residues) spans Leu47–Arg65. N-linked (GlcNAc...) asparagine glycosylation occurs at Asn60. Residues Tyr101 to Ile125 traverse the membrane as a helical segment. The Cytoplasmic segment spans residues Tyr126–Asn136. A helical membrane pass occupies residues Ile137–Leu162. At Ala163–Lys174 the chain is on the extracellular side. An intrachain disulfide couples Cys173 to Cys254. Residues Leu175–Ile196 form a helical membrane-spanning segment. The Cytoplasmic segment spans residues Asp197–Thr217. A helical transmembrane segment spans residues Ala218–Val242. At Thr243–Thr270 the chain is on the extracellular side. Residues Ala271–Met295 form a helical membrane-spanning segment. Over Thr296–Thr323 the chain is Cytoplasmic. Ser304 carries the post-translational modification Phosphoserine. Residues Val324 to Tyr349 form a helical membrane-spanning segment. Residues Asp350–Ser361 lie on the Extracellular side of the membrane. A helical transmembrane segment spans residues Phe362–Val388. Over Ser389–Ser441 the chain is Cytoplasmic. S-palmitoyl cysteine attachment occurs at residues Cys402 and Cys404. Phosphoserine is present on Ser418. Phosphotyrosine is present on Tyr438. Residues Ser439, Ser440, and Ser441 each carry the phosphoserine modification.

Belongs to the G-protein coupled receptor 1 family. Endothelin receptor subfamily. EDNRB sub-subfamily.

It localises to the cell membrane. Non-specific receptor for endothelin 1, 2, and 3. Mediates its action by association with G proteins that activate a phosphatidylinositol-calcium second messenger system. The sequence is that of Endothelin receptor type B (EDNRB) from Oryctolagus cuniculus (Rabbit).